Consider the following 191-residue polypeptide: CASP-like protein 2U4 (191 aa).

Residues 1–25 (MGAYDGAEAPRAAPASTAANSRPSR) lie on the Cytoplasmic side of the membrane. The chain crosses the membrane as a helical span at residues 26 to 46 (LLLLHSLLLRLVAVVLSILVI). At 47-68 (AVMVHAKQRVMIFKAEWDNSKA) the chain is on the extracellular side. The chain crosses the membrane as a helical span at residues 69–89 (FVALVTISAICLGYSFLQFIL). The Cytoplasmic segment spans residues 90–114 (SAFHLCSKSWKSPTKCWAWMNFIAD). Residues 115 to 135 (QILTYAMLGAAAAAAELAYIA) traverse the membrane as a helical segment. Residues 136–157 (KNGSSRAQWQPICSTFNTFCTR) are Extracellular-facing. Asn-137 is a glycosylation site (N-linked (GlcNAc...) asparagine). A helical transmembrane segment spans residues 158 to 178 (AGASIILSFIAVLALANSSAI). The Cytoplasmic segment spans residues 179–191 (SAYHLFRRPSSSV).

It belongs to the Casparian strip membrane proteins (CASP) family. Homodimer and heterodimers.

It localises to the cell membrane. The polypeptide is CASP-like protein 2U4 (Selaginella moellendorffii (Spikemoss)).